The primary structure comprises 163 residues: ECF RNA polymerase sigma factor SigM (163 aa).

The Polymerase core binding motif lies at D30 to I43. The segment at residues Y127–F146 is a DNA-binding region (H-T-H motif).

The protein belongs to the sigma-70 factor family. ECF subfamily. Interacts with the N-terminus of YhdL, which is probably its anti-sigma factor. Interacts transiently with the RNAP core.

In terms of biological role, sigma factors are initiation factors that promote the attachment of RNA polymerase (RNAP) to specific initiation sites and are then released. Extracytoplasmic function (ECF) sigma factors are held in an inactive form by a cognate anti-sigma factor (YhdL) until released. This sigma factor is involved in the maintenance of membrane and cell wall integrity in response to environmental stresses including salt, acid, ethanol and antibiotics stress. Partially regulates transcription from a number of genes including disA. Associates with RNAP core under all growth phases. The chain is ECF RNA polymerase sigma factor SigM (sigM) from Bacillus subtilis (strain 168).